We begin with the raw amino-acid sequence, 53 residues long: Insulin (53 aa).

Residues 1–30 (DVEPLLGFLSPKSGQENEVDDFPYKGQGEL) constitute a propeptide, c peptide. Cysteines 38 and 43 form a disulfide.

The protein belongs to the insulin family. Heterodimer of a B chain and an A chain linked by two disulfide bonds.

The protein resides in the secreted. Functionally, insulin decreases blood glucose concentration. It increases cell permeability to monosaccharides, amino acids and fatty acids. It accelerates glycolysis, the pentose phosphate cycle, and glycogen synthesis in liver. The chain is Insulin (ins) from Anguilla anguilla (European freshwater eel).